The primary structure comprises 318 residues: D-alanine--D-alanine ligase (318 aa).

Positions 116-311 (KQVWQSLGIP…FQQLVLAILA (196 aa)) constitute an ATP-grasp domain. 142-197 (SAELGFPLIVKPAHEGSSIGMAKVNSEQELVAAWKDAAKYDSQVLVEQWIHGPEFT) contacts ATP. Residues Asp-265, Glu-278, and Asn-280 each contribute to the Mg(2+) site.

Belongs to the D-alanine--D-alanine ligase family. Mg(2+) serves as cofactor. Requires Mn(2+) as cofactor.

Its subcellular location is the cytoplasm. The catalysed reaction is 2 D-alanine + ATP = D-alanyl-D-alanine + ADP + phosphate + H(+). The protein operates within cell wall biogenesis; peptidoglycan biosynthesis. In terms of biological role, cell wall formation. The polypeptide is D-alanine--D-alanine ligase (Pseudomonas entomophila (strain L48)).